We begin with the raw amino-acid sequence, 263 residues long: Benzil reductase ((S)-benzoin forming) IRC24 (263 aa).

NADP(+)-binding residues include Ile7 and Asn86. The Proton donor role is filled by Ser143. Residues Tyr157, Lys161, Val190, and Thr192 each contribute to the NADP(+) site. The Proton acceptor role is filled by Tyr157. Lys161 serves as the catalytic Lowers pKa of active site Tyr.

Belongs to the short-chain dehydrogenases/reductases (SDR) family.

The enzyme catalyses (S)-benzoin + NADP(+) = benzil + NADPH + H(+). It carries out the reaction 2-hydroxy-1-phenyl-1-propanone + NADP(+) = 1-phenyl-1,2-propanedione + NADPH + H(+). Its function is as follows. Reduces benzil stereospecifically to (S)-benzoin. Also reduces 1-phenyl-1,2-propanedione to 2-hydroxy-1-phenyl-1-propanone. Is probably involved in a pathway contributing to genomic integrity. In Saccharomyces cerevisiae (strain ATCC 204508 / S288c) (Baker's yeast), this protein is Benzil reductase ((S)-benzoin forming) IRC24 (IRC24).